Here is a 596-residue protein sequence, read N- to C-terminus: Cell adhesion molecule CEACAM20 (596 aa).

Residues 1 to 30 (MGPADSWGHHWMGILLSASLCTVWSPPAAA) form the signal peptide. The Extracellular portion of the chain corresponds to 31–450 (QLTLNANPLD…SSLSSGAIAG (420 aa)). Ig-like C2-type domains lie at 58–154 (PQIH…PIFL), 160–246 (PDPV…GTLK), 256–341 (PQVV…LELT), and 346–432 (PDQV…TSVL). A disulfide bond links cysteine 90 and cysteine 138. 2 N-linked (GlcNAc...) asparagine glycosylation sites follow: asparagine 96 and asparagine 105. Residues cysteine 276 and cysteine 324 are joined by a disulfide bond. N-linked (GlcNAc...) asparagine glycans are attached at residues asparagine 280, asparagine 306, asparagine 317, asparagine 368, and asparagine 415. Cysteine 375 and cysteine 416 form a disulfide bridge. The helical transmembrane segment at 451 to 471 (IVIGILAVIAVASELGYFLCI) threads the bilayer. Residues 472-585 (RNARRPSRKT…SIYEELVNPE (114 aa)) lie on the Cytoplasmic side of the membrane. 2 disordered regions span residues 477–510 (PSRK…LSPE) and 527–563 (QPPD…LMPP). The segment covering 501–510 (EPSSESLSPE) has biased composition (low complexity). A compositionally biased stretch (pro residues) spans 553 to 562 (WKPPPKPLMP). Residues tyrosine 578 and tyrosine 589 each carry the phosphotyrosine modification.

It belongs to the immunoglobulin superfamily. CEA family. Interacts (via extracellular domain) with PTPRH (via extracellular domain); the interaction dephosphorylates CEACAM20. Interacts (phosphorylated form) with SYK (via SH2 domains); the interaction further enhances CEACAM20 phosphorylation. In terms of processing, phosphorylated on tyrosine residues by SYK, SRC and FYN in vitro.

It is found in the cell projection. The protein resides in the microvillus membrane. Its subcellular location is the apical cell membrane. Functionally, together with the tyrosine-protein kinase SYK, enhances production of the cytokine CXCL8/IL-8 via the NFKB pathway and may thus have a role in the intestinal immune response. This Homo sapiens (Human) protein is Cell adhesion molecule CEACAM20.